A 286-amino-acid polypeptide reads, in one-letter code: Glycine--tRNA ligase alpha subunit (286 aa).

Belongs to the class-II aminoacyl-tRNA synthetase family. Tetramer of two alpha and two beta subunits.

It is found in the cytoplasm. The enzyme catalyses tRNA(Gly) + glycine + ATP = glycyl-tRNA(Gly) + AMP + diphosphate. This is Glycine--tRNA ligase alpha subunit from Thermotoga sp. (strain RQ2).